The following is a 506-amino-acid chain: ATP synthase subunit alpha (506 aa).

169-176 contributes to the ATP binding site; that stretch reads GDRGTGKT.

Belongs to the ATPase alpha/beta chains family. F-type ATPases have 2 components, CF(1) - the catalytic core - and CF(0) - the membrane proton channel. CF(1) has five subunits: alpha(3), beta(3), gamma(1), delta(1), epsilon(1). CF(0) has three main subunits: a(1), b(2) and c(9-12). The alpha and beta chains form an alternating ring which encloses part of the gamma chain. CF(1) is attached to CF(0) by a central stalk formed by the gamma and epsilon chains, while a peripheral stalk is formed by the delta and b chains.

It localises to the cell membrane. It carries out the reaction ATP + H2O + 4 H(+)(in) = ADP + phosphate + 5 H(+)(out). Its function is as follows. Produces ATP from ADP in the presence of a proton gradient across the membrane. The alpha chain is a regulatory subunit. This Symbiobacterium thermophilum (strain DSM 24528 / JCM 14929 / IAM 14863 / T) protein is ATP synthase subunit alpha.